The following is a 274-amino-acid chain: tRNA pseudouridine synthase A (274 aa).

Aspartate 54 acts as the Nucleophile in catalysis. Tyrosine 112 is a binding site for substrate.

This sequence belongs to the tRNA pseudouridine synthase TruA family. Homodimer.

It carries out the reaction uridine(38/39/40) in tRNA = pseudouridine(38/39/40) in tRNA. Functionally, formation of pseudouridine at positions 38, 39 and 40 in the anticodon stem and loop of transfer RNAs. The chain is tRNA pseudouridine synthase A from Solidesulfovibrio magneticus (strain ATCC 700980 / DSM 13731 / RS-1) (Desulfovibrio magneticus).